A 49-amino-acid chain; its full sequence is Large ribosomal subunit protein bL33D (49 aa).

This sequence belongs to the bacterial ribosomal protein bL33 family.

The chain is Large ribosomal subunit protein bL33D (rpmG4) from Enterococcus faecalis (strain ATCC 700802 / V583).